A 678-amino-acid chain; its full sequence is DNA ligase (678 aa).

NAD(+) contacts are provided by residues 36-40 (DAEYD), 85-86 (SL), and Glu-117. The N6-AMP-lysine intermediate role is filled by Lys-119. The NAD(+) site is built by Arg-140, Glu-177, Lys-294, and Lys-318. Zn(2+) is bound by residues Cys-412, Cys-415, Cys-430, and Cys-436. One can recognise a BRCT domain in the interval 595 to 678 (ADEQPLNGQT…NLLREHGIEV (84 aa)).

This sequence belongs to the NAD-dependent DNA ligase family. LigA subfamily. Requires Mg(2+) as cofactor. It depends on Mn(2+) as a cofactor.

It carries out the reaction NAD(+) + (deoxyribonucleotide)n-3'-hydroxyl + 5'-phospho-(deoxyribonucleotide)m = (deoxyribonucleotide)n+m + AMP + beta-nicotinamide D-nucleotide.. Its function is as follows. DNA ligase that catalyzes the formation of phosphodiester linkages between 5'-phosphoryl and 3'-hydroxyl groups in double-stranded DNA using NAD as a coenzyme and as the energy source for the reaction. It is essential for DNA replication and repair of damaged DNA. This chain is DNA ligase, found in Marinobacter nauticus (strain ATCC 700491 / DSM 11845 / VT8) (Marinobacter aquaeolei).